A 506-amino-acid chain; its full sequence is Cysteine--tRNA ligase (506 aa).

Cysteine 34 is a Zn(2+) binding site. The short motif at proline 36–asparagine 46 is the 'HIGH' region element. Zn(2+)-binding residues include cysteine 230, histidine 269, and glutamate 273. Residues lysine 302–serine 306 carry the 'KMSKS' region motif. ATP is bound at residue lysine 305.

It belongs to the class-I aminoacyl-tRNA synthetase family. In terms of assembly, monomer. Requires Zn(2+) as cofactor.

The protein localises to the cytoplasm. The enzyme catalyses tRNA(Cys) + L-cysteine + ATP = L-cysteinyl-tRNA(Cys) + AMP + diphosphate. The chain is Cysteine--tRNA ligase from Brucella melitensis biotype 2 (strain ATCC 23457).